The sequence spans 156 residues: Small ribosomal subunit protein uS7 (156 aa).

Belongs to the universal ribosomal protein uS7 family. In terms of assembly, part of the 30S ribosomal subunit. Contacts proteins S9 and S11.

In terms of biological role, one of the primary rRNA binding proteins, it binds directly to 16S rRNA where it nucleates assembly of the head domain of the 30S subunit. Is located at the subunit interface close to the decoding center, probably blocks exit of the E-site tRNA. The chain is Small ribosomal subunit protein uS7 from Klebsiella pneumoniae subsp. pneumoniae (strain ATCC 700721 / MGH 78578).